The chain runs to 287 residues: Phosphoribosylaminoimidazole-succinocarboxamide synthase (287 aa).

It belongs to the SAICAR synthetase family.

The enzyme catalyses 5-amino-1-(5-phospho-D-ribosyl)imidazole-4-carboxylate + L-aspartate + ATP = (2S)-2-[5-amino-1-(5-phospho-beta-D-ribosyl)imidazole-4-carboxamido]succinate + ADP + phosphate + 2 H(+). It functions in the pathway purine metabolism; IMP biosynthesis via de novo pathway; 5-amino-1-(5-phospho-D-ribosyl)imidazole-4-carboxamide from 5-amino-1-(5-phospho-D-ribosyl)imidazole-4-carboxylate: step 1/2. This is Phosphoribosylaminoimidazole-succinocarboxamide synthase from Neisseria meningitidis serogroup A / serotype 4A (strain DSM 15465 / Z2491).